The primary structure comprises 406 residues: MSQKGSVKKAVLAYSGGLDTSIIVRWLIEEYGCEVIAFAADVGQGKELDGIPEKARQTGASKCYVEDLREEFVRDFVFPMFRANAIYEGRYFLGTSIARPLISKKQMEIALAEEAEAVCHGATGKGNDQIRFELAYYHFNPEIKIIAPWREWDLNSRESLIAYANKHGIPVPVTKKRPWSSDRNLLHISFEGGVLEDPWAEPPEDMYLLSVSPEQAPDKPEYVEIEFRNGDPVSINGESLSPAQLLAHLNELGGKHGIGRADIMENRFVGMKSRGVYETPGGTILEEAHRGVEQITMDREVLNLRDSLIPRYATMVYNGFWFAPEREAMQAMIDETQKTVNGVARVKLYKGHCRVVGRKSETNSLFDPEVATFEADEVYNQADAEGFIRLNALRLRIRSAMQKKHG.

Residues 13–21 (AYSGGLDTS) and alanine 40 contribute to the ATP site. Residues tyrosine 91 and serine 96 each coordinate L-citrulline. Glycine 121 serves as a coordination point for ATP. 3 residues coordinate L-aspartate: threonine 123, asparagine 127, and aspartate 128. Residue asparagine 127 coordinates L-citrulline. L-citrulline is bound by residues arginine 131, serine 180, serine 189, glutamate 265, and tyrosine 277.

Belongs to the argininosuccinate synthase family. Type 1 subfamily. In terms of assembly, homotetramer.

The protein resides in the cytoplasm. It carries out the reaction L-citrulline + L-aspartate + ATP = 2-(N(omega)-L-arginino)succinate + AMP + diphosphate + H(+). It participates in amino-acid biosynthesis; L-arginine biosynthesis; L-arginine from L-ornithine and carbamoyl phosphate: step 2/3. This chain is Argininosuccinate synthase, found in Syntrophotalea carbinolica (strain DSM 2380 / NBRC 103641 / GraBd1) (Pelobacter carbinolicus).